Reading from the N-terminus, the 387-residue chain is Deoxyguanosinetriphosphate triphosphohydrolase-like protein (387 aa).

Residues Met1 to Ser26 form a disordered region. The segment covering Val17 to Ser26 has biased composition (basic and acidic residues). One can recognise an HD domain in the interval Arg62–Asn198.

Belongs to the dGTPase family. Type 2 subfamily.

The protein is Deoxyguanosinetriphosphate triphosphohydrolase-like protein of Roseobacter denitrificans (strain ATCC 33942 / OCh 114) (Erythrobacter sp. (strain OCh 114)).